Here is a 69-residue protein sequence, read N- to C-terminus: DNA gyrase inhibitor YacG (69 aa).

C7, C10, C26, and C30 together coordinate Zn(2+).

The protein belongs to the DNA gyrase inhibitor YacG family. In terms of assembly, interacts with GyrB. Requires Zn(2+) as cofactor.

In terms of biological role, inhibits all the catalytic activities of DNA gyrase by preventing its interaction with DNA. Acts by binding directly to the C-terminal domain of GyrB, which probably disrupts DNA binding by the gyrase. This chain is DNA gyrase inhibitor YacG, found in Shewanella baltica (strain OS155 / ATCC BAA-1091).